The chain runs to 244 residues: Large ribosomal subunit protein bL25 (244 aa).

The segment at 197 to 244 is disordered; the sequence is ADVEAEAAEAALAKEAATEAAEEEETEKPASEAEASGEAEQADTDKKE. Low complexity predominate over residues 204-215; it reads AEAALAKEAATE.

This sequence belongs to the bacterial ribosomal protein bL25 family. CTC subfamily. Part of the 50S ribosomal subunit; part of the 5S rRNA/L5/L18/L25 subcomplex. Contacts the 5S rRNA. Binds to the 5S rRNA independently of L5 and L18.

Its function is as follows. This is one of the proteins that binds to the 5S RNA in the ribosome where it forms part of the central protuberance. The polypeptide is Large ribosomal subunit protein bL25 (Coxiella burnetii (strain CbuK_Q154) (Coxiella burnetii (strain Q154))).